Reading from the N-terminus, the 245-residue chain is Rhamnogalacturonan acetylesterase (245 aa).

Residues 1–17 form the signal peptide; sequence MKSIALTSLSLLPSALA. Ser-26 serves as the catalytic Nucleophile. Cys-100 and Cys-108 are oxidised to a cystine. Catalysis depends on residues Asp-204 and His-207. The cysteines at positions 226 and 244 are disulfide-linked.

This sequence belongs to the 'GDSL' lipolytic enzyme family.

It localises to the secreted. The enzyme catalyses Hydrolytic cleavage of 2-O-acetyl- or 3-O-acetyl groups of alpha-D-galacturonic acid in rhamnogalacturonan I.. In terms of biological role, plays a key role in the degradation of rhamnogalacturonan in the cell wall. Involved in degradation of pectin. The polypeptide is Rhamnogalacturonan acetylesterase (Emericella nidulans (strain FGSC A4 / ATCC 38163 / CBS 112.46 / NRRL 194 / M139) (Aspergillus nidulans)).